Reading from the N-terminus, the 556-residue chain is Phosphoacetylglucosamine mutase (556 aa).

Ser68 acts as the Phosphoserine intermediate in catalysis. Mg(2+) contacts are provided by Ser68, Asp286, Asp288, and Asp290. Ser68 bears the Phosphoserine mark. Substrate is bound by residues 386–388 (EAN), 518–522 (RPSGT), and Arg527.

It belongs to the phosphohexose mutase family. The cofactor is Mg(2+).

The enzyme catalyses N-acetyl-alpha-D-glucosamine 1-phosphate = N-acetyl-D-glucosamine 6-phosphate. Its pathway is nucleotide-sugar biosynthesis; UDP-N-acetyl-alpha-D-glucosamine biosynthesis; N-acetyl-alpha-D-glucosamine 1-phosphate from alpha-D-glucosamine 6-phosphate (route I): step 2/2. In terms of biological role, interconverts GlcNAc-6-P and GlcNAc-1-P. The chain is Phosphoacetylglucosamine mutase (DRT101) from Arabidopsis thaliana (Mouse-ear cress).